A 220-amino-acid polypeptide reads, in one-letter code: MTGVGENQLISIQPDELKFLFELEKQSYCDLKVANKTENYVAFKVKTTSPKKYFVRPNTGVIQPWDSCIIRVTLQAQREYPPDMQCKDKFLLQSTIVPPHTDVDELPQDTFTKDSGKTLTECKLKVSYITPSTTQRSSESGATNGDGQSSETISTIQRLKEERDAAVKQTQQLQHELETVRRRRNQRNSGNGLSLKLAAMVGLIGLIIGFILKLTLASPT.

An N-acetylmethionine modification is found at methionine 1. Topologically, residues 1–196 are cytoplasmic; sequence MTGVGENQLI…RNSGNGLSLK (196 aa). An N-acetylthreonine; in Vesicle-associated protein 2-1, N-terminally processed modification is found at threonine 2. The MSP domain occupies 9 to 129; the sequence is LISIQPDELK…TECKLKVSYI (121 aa). Residues 133 to 154 form a disordered region; it reads TTQRSSESGATNGDGQSSETIS. The stretch at 153-188 forms a coiled coil; that stretch reads ISTIQRLKEERDAAVKQTQQLQHELETVRRRRNQRN. The chain crosses the membrane as a helical; Anchor for type IV membrane protein span at residues 197-217; that stretch reads LAAMVGLIGLIIGFILKLTLA.

The protein belongs to the VAMP-associated protein (VAP) (TC 9.B.17) family.

It is found in the endoplasmic reticulum membrane. May play a role in vesicle trafficking. The chain is Vesicle-associated protein 2-1 (PVA21) from Arabidopsis thaliana (Mouse-ear cress).